We begin with the raw amino-acid sequence, 306 residues long: Pantothenate kinase (306 aa).

91–98 (GSVAVGKS) is an ATP binding site.

The protein belongs to the prokaryotic pantothenate kinase family.

It localises to the cytoplasm. The enzyme catalyses (R)-pantothenate + ATP = (R)-4'-phosphopantothenate + ADP + H(+). Its pathway is cofactor biosynthesis; coenzyme A biosynthesis; CoA from (R)-pantothenate: step 1/5. This chain is Pantothenate kinase, found in Streptococcus pyogenes serotype M49 (strain NZ131).